The sequence spans 245 residues: Derlin-1 (245 aa).

The Cytoplasmic segment spans residues 1 to 5; it reads MDLEN. A helical membrane pass occupies residues 6-26; that stretch reads FLLGIPIVTRYWFLASTIIPL. Over 27 to 57 the chain is Lumenal; the sequence is LGRFGFINVQWMFLQWDLVVNKFQFWRPLTA. The chain crosses the membrane as a helical span at residues 58-78; it reads LIYYPVTPQTGFHWLMMCYFL. The Cytoplasmic portion of the chain corresponds to 79–100; that stretch reads YNYSKALESETYRGRSADYLFM. Residues 101 to 121 form a helical membrane-spanning segment; the sequence is LIFNWFFCSGLCMALDIYFLL. The Lumenal segment spans residues 122 to 166; that stretch reads EPMVISVLYVWCQVNKDTIVSFWFGMRFPARYLPWVLWGFNAVLR. The chain crosses the membrane as a helical span at residues 167–187; sequence GGGTNELVGILVGHAYFFVAL. The Cytoplasmic portion of the chain corresponds to 188-245; that stretch reads KYPDEYGVDLISTPEFLHRLIPDEDGGIHGQDGNIRGARQQPRGHQWPGGVGARLGGN. Residues 218–245 form a disordered region; the sequence is QDGNIRGARQQPRGHQWPGGVGARLGGN. Gly residues predominate over residues 234-245; the sequence is WPGGVGARLGGN.

Belongs to the derlin family.

The protein localises to the endoplasmic reticulum membrane. Specifically required for the degradation process of misfolded endoplasmic reticulum (ER) luminal proteins. Participates in the transfer of misfolded proteins from the ER to the cytosol, where they are destroyed by the proteasome in a ubiquitin-dependent manner. This is Derlin-1 from Caenorhabditis elegans.